We begin with the raw amino-acid sequence, 118 residues long: Large ribosomal subunit protein uL22 (118 aa).

It belongs to the universal ribosomal protein uL22 family. In terms of assembly, part of the 50S ribosomal subunit.

This protein binds specifically to 23S rRNA; its binding is stimulated by other ribosomal proteins, e.g. L4, L17, and L20. It is important during the early stages of 50S assembly. It makes multiple contacts with different domains of the 23S rRNA in the assembled 50S subunit and ribosome. In terms of biological role, the globular domain of the protein is located near the polypeptide exit tunnel on the outside of the subunit, while an extended beta-hairpin is found that lines the wall of the exit tunnel in the center of the 70S ribosome. This chain is Large ribosomal subunit protein uL22, found in Nostoc punctiforme (strain ATCC 29133 / PCC 73102).